Reading from the N-terminus, the 346-residue chain is Golgi-associated RAB2 interactor protein 2 (346 aa).

Residues Thr275 to Phe346 form a disordered region. 2 stretches are compositionally biased toward basic and acidic residues: residues Thr283 to Pro297 and Lys334 to Phe346.

The protein belongs to the GARIN family. As to quaternary structure, interacts with CALM1.

The protein localises to the cell projection. The protein resides in the cilium. It is found in the flagellum. Seems to play a role in sperm motility. The sequence is that of Golgi-associated RAB2 interactor protein 2 (GARIN2) from Macaca fascicularis (Crab-eating macaque).